Consider the following 288-residue polypeptide: Rhox homeobox family member 2B (288 aa).

The interval Ser16 to Pro136 is disordered. Positions Val39–Pro48 are enriched in acidic residues. Positions Gly68–Gly80 are enriched in basic and acidic residues. A DNA-binding region (homeobox) is located at residues Gln134–Gln193. A Nuclear localization signal motif is present at residues Arg186–Ala195.

It belongs to the paired-like homeobox family. PEPP subfamily. As to expression, expressed in testis, mainly expressed in germ cells, but also detected in somatic cells such as Sertoli cells, Leydig cells and peritubular cells.

It localises to the nucleus. Its function is as follows. Transcription factor maybe involved in reproductive processes. Modulates expression of target genes encoding proteins involved in processes relevant to spermatogenesis. The chain is Rhox homeobox family member 2B from Homo sapiens (Human).